The sequence spans 330 residues: Virulence plasmid integrase pGP8-D (330 aa).

The region spanning 39–124 (FSLFEVIMHW…SYISLTRFLN (86 aa)) is the Core-binding (CB) domain. The Tyr recombinase domain maps to 152–327 (VKTNAMNRLQ…SREDNASKKM (176 aa)). Catalysis depends on residues Arg-189, Lys-214, His-279, Arg-282, and His-305. Tyr-314 functions as the O-(3'-phospho-DNA)-tyrosine intermediate in the catalytic mechanism.

This sequence belongs to the 'phage' integrase family.

In Chlamydia muridarum (strain MoPn / Nigg), this protein is Virulence plasmid integrase pGP8-D.